The sequence spans 55 residues: ATP synthase protein 8 (55 aa).

A helical membrane pass occupies residues 4 to 24 (LDPAPWFSMLTVSWLIIFLLI).

It belongs to the ATPase protein 8 family. As to quaternary structure, F-type ATPases have 2 components, CF(1) - the catalytic core - and CF(0) - the membrane proton channel.

The protein resides in the mitochondrion membrane. In terms of biological role, mitochondrial membrane ATP synthase (F(1)F(0) ATP synthase or Complex V) produces ATP from ADP in the presence of a proton gradient across the membrane which is generated by electron transport complexes of the respiratory chain. F-type ATPases consist of two structural domains, F(1) - containing the extramembraneous catalytic core and F(0) - containing the membrane proton channel, linked together by a central stalk and a peripheral stalk. During catalysis, ATP synthesis in the catalytic domain of F(1) is coupled via a rotary mechanism of the central stalk subunits to proton translocation. Part of the complex F(0) domain. Minor subunit located with subunit a in the membrane. The protein is ATP synthase protein 8 (MT-ATP8) of Petromyzon marinus (Sea lamprey).